The primary structure comprises 239 residues: 1-(5-phosphoribosyl)-5-[(5-phosphoribosylamino)methylideneamino] imidazole-4-carboxamide isomerase (239 aa).

Asp-9 acts as the Proton acceptor in catalysis. Residue Asp-131 is the Proton donor of the active site.

It belongs to the HisA/HisF family.

The protein resides in the cytoplasm. It catalyses the reaction 1-(5-phospho-beta-D-ribosyl)-5-[(5-phospho-beta-D-ribosylamino)methylideneamino]imidazole-4-carboxamide = 5-[(5-phospho-1-deoxy-D-ribulos-1-ylimino)methylamino]-1-(5-phospho-beta-D-ribosyl)imidazole-4-carboxamide. The protein operates within amino-acid biosynthesis; L-histidine biosynthesis; L-histidine from 5-phospho-alpha-D-ribose 1-diphosphate: step 4/9. This is 1-(5-phosphoribosyl)-5-[(5-phosphoribosylamino)methylideneamino] imidazole-4-carboxamide isomerase from Parabacteroides distasonis (strain ATCC 8503 / DSM 20701 / CIP 104284 / JCM 5825 / NCTC 11152).